A 241-amino-acid chain; its full sequence is uncharacterized protein (241 aa).

This is an uncharacterized protein from Saccharolobus islandicus (Sulfolobus islandicus).